Here is a 318-residue protein sequence, read N- to C-terminus: MDIRAPEQQYNPYRVYTREQWARLRDDTPMTLEPGEFDRLRSLHDRLDLQEVEDIYLPLSRLLSIYVDAMQRLYYAERQFLNIRDRKMPYIIGVAGSVAVGKSTTARVLQALLARWSPRPKVDLITTDGFLYPNAVLDRQGIMQKKGFPESYDLPLLLGFLSDIKAGRRHVRAPVYSHLTYDIVPNQWVEIDQPDILIVEGVNVLQTGKLPRDGKAVPVVSDFFDFSVYIDADEAALRRWYIKRFLALRDTAFTNPKSYFNRYALLSDEEATATAIAIWERTNLANLEDNILPTRPRATLILKKGPDHVVESVALRRL.

96-103 provides a ligand contact to ATP; that stretch reads GSVAVGKS.

The protein belongs to the prokaryotic pantothenate kinase family.

Its subcellular location is the cytoplasm. The catalysed reaction is (R)-pantothenate + ATP = (R)-4'-phosphopantothenate + ADP + H(+). It participates in cofactor biosynthesis; coenzyme A biosynthesis; CoA from (R)-pantothenate: step 1/5. This Bradyrhizobium diazoefficiens (strain JCM 10833 / BCRC 13528 / IAM 13628 / NBRC 14792 / USDA 110) protein is Pantothenate kinase.